The following is a 308-amino-acid chain: Probable GTP 3',8-cyclase (308 aa).

Residues 4-224 (RFGRPLEDLR…QIRKKHFRPR (221 aa)) form the Radical SAM core domain. Arg13 contributes to the GTP binding site. [4Fe-4S] cluster-binding residues include Cys20, Cys24, and Cys27. Lys60 is a binding site for GTP. Position 64 (Gly64) interacts with S-adenosyl-L-methionine. Thr90 provides a ligand contact to GTP. An S-adenosyl-L-methionine-binding site is contributed by Ser114. Lys151 is a binding site for GTP. [4Fe-4S] cluster is bound by residues Cys245 and Cys248. 250-252 (RIR) contributes to the GTP binding site. Residue Cys262 coordinates [4Fe-4S] cluster.

It belongs to the radical SAM superfamily. MoaA family. [4Fe-4S] cluster serves as cofactor.

It catalyses the reaction GTP + AH2 + S-adenosyl-L-methionine = (8S)-3',8-cyclo-7,8-dihydroguanosine 5'-triphosphate + 5'-deoxyadenosine + L-methionine + A + H(+). It functions in the pathway cofactor biosynthesis; molybdopterin biosynthesis. Catalyzes the cyclization of GTP to (8S)-3',8-cyclo-7,8-dihydroguanosine 5'-triphosphate. The polypeptide is Probable GTP 3',8-cyclase (Saccharolobus islandicus (strain L.S.2.15 / Lassen #1) (Sulfolobus islandicus)).